Here is a 188-residue protein sequence, read N- to C-terminus: Inner membrane-spanning protein YciB (188 aa).

The next 5 membrane-spanning stretches (helical) occupy residues 23 to 43 (FQKATWVLVAASAAALAIGYA), 49 to 69 (AMLPLFFGGMALVFGTLGLIF), 73 to 93 (VFVKIKVTVINLALASFLVGG), 116 to 133 (WRTLTLRYGAYFAFVAII), and 149 to 169 (FRLALLPVALVFVATQLPFMM).

It belongs to the YciB family.

Its subcellular location is the cell inner membrane. Its function is as follows. Plays a role in cell envelope biogenesis, maintenance of cell envelope integrity and membrane homeostasis. In Caulobacter vibrioides (strain ATCC 19089 / CIP 103742 / CB 15) (Caulobacter crescentus), this protein is Inner membrane-spanning protein YciB.